A 592-amino-acid chain; its full sequence is Frizzled-9 (592 aa).

The first 23 residues, 1-23 (MAVPPLLRGALLLWQLLATGGAA), serve as a signal peptide directing secretion. Topologically, residues 24 to 230 (LEIGRFDPER…EVFWSRRDKD (207 aa)) are extracellular. Positions 35–156 (RGPAPCQAME…NDPHALCMEA (122 aa)) constitute an FZ domain. Disulfide bonds link C40–C101, C48–C94, C85–C123, C112–C153, and C116–C140. A required for Wnt-activated receptor activity region spans residues 59–173 (PNLLGHTSQG…PTEPHKGLGM (115 aa)). The chain crosses the membrane as a helical span at residues 231–251 (FALVWMAVWSALCFFSTAFTV). Residues 252–267 (FTFLLEPHRFQYPERP) are Cytoplasmic-facing. Residues 268–288 (IIFLSMCYNVYSLAFLIRAVA) form a helical membrane-spanning segment. The Extracellular segment spans residues 289–314 (GAQSVACDQEAGALYVIQEGLENTGC). A helical membrane pass occupies residues 315 to 335 (TLVFLLLYYFGMASSLWWVVL). The Cytoplasmic segment spans residues 336–356 (TLTWFLAAGKKWGHEAIEAHG). Residues 357-377 (SYFHMAAWGLPALKTIVVLTL) traverse the membrane as a helical segment. The Extracellular portion of the chain corresponds to 378 to 401 (RKVAGDELTGLCYVASMDPAALTG). Residues 402–422 (FVLVPLSCYLVLGTSFLLTGF) traverse the membrane as a helical segment. Residues 423-448 (VALFHIRKIMKTGGTNTEKLEKLMVK) lie on the Cytoplasmic side of the membrane. Residues 449-469 (IGVFSILYTVPATCVIVCYVY) form a helical membrane-spanning segment. Residues 470–509 (ERLNMDFWRLRATEQPCTAAAVPGGRRDCSLPGGSVPTVA) are Extracellular-facing. The helical transmembrane segment at 510 to 530 (VFMLKIFMSLVVGITSGVWVW) threads the bilayer. The Cytoplasmic portion of the chain corresponds to 531–592 (SSKTFQTWQS…DPSLENPTHL (62 aa)). Residues 533–538 (KTFQTW) carry the Lys-Thr-X-X-X-Trp motif, mediates interaction with the PDZ domain of Dvl family members motif. The interval 555–592 (ACRTPGGYGRGTHCHYKAPTVVLHMTKTDPSLENPTHL) is required for CTNNB1 accumulation and TCF transcription factor activity.

This sequence belongs to the G-protein coupled receptor Fz/Smo family. In terms of processing, ubiquitinated by ZNRF3, leading to its degradation by the proteasome.

It is found in the cell membrane. In terms of biological role, receptor for WNT2 that is coupled to the beta-catenin canonical signaling pathway, which leads to the activation of disheveled proteins, inhibition of GSK-3 kinase, nuclear accumulation of beta-catenin and activation of Wnt target genes. Plays a role in neuromuscular junction (NMJ) assembly by negatively regulating the clustering of acetylcholine receptors (AChR) through the beta-catenin canonical signaling pathway. May play a role in neural progenitor cells (NPCs) viability through the beta-catenin canonical signaling pathway by negatively regulating cell cycle arrest leading to inhibition of neuron apoptotic process. During hippocampal development, regulates neuroblast proliferation and apoptotic cell death. Controls bone formation through non canonical Wnt signaling mediated via ISG15. Positively regulates bone regeneration through non canonical Wnt signaling. This is Frizzled-9 from Rattus norvegicus (Rat).